The primary structure comprises 317 residues: MYDWLNALPKAELHLHLEGSLEPELLFALAERNKIALPWNDVETLRKAYAFNNLQEFLDLYYRGADALRTEQDFYDLTWAYLLRCKEQNVIHTEPFFDPQTHTDRGIPFEVVLAGITGALKDGKSKLGVDSGLILSFLRHLSQEEAEKTLDQALPFRDAFVAVGLDSSEMGHPPSKFQRVFDRARSEGFLTVAHAGEEGPPEYIWEALDLLKIQRIDHGVRAIEDERLMQRIIDEQIPLTVCPLSNTKLCVFDDMAQHNILDMLERGVKVTVNSDDPAYFGGYVTENFHALYTHLGMTEDQAKRLAQNSLDARLVKP.

Zn(2+) is bound by residues histidine 14, histidine 16, and histidine 194. Glutamate 197 (proton donor) is an active-site residue. Aspartate 275 is a Zn(2+) binding site. Aspartate 276 serves as a coordination point for substrate.

This sequence belongs to the metallo-dependent hydrolases superfamily. Adenosine and AMP deaminases family. Adenine deaminase type 2 subfamily. It depends on Zn(2+) as a cofactor.

It carries out the reaction adenine + H2O + H(+) = hypoxanthine + NH4(+). Catalyzes the hydrolytic deamination of adenine to hypoxanthine. Plays an important role in the purine salvage pathway and in nitrogen catabolism. The sequence is that of Adenine deaminase from Pseudomonas savastanoi pv. phaseolicola (strain 1448A / Race 6) (Pseudomonas syringae pv. phaseolicola (strain 1448A / Race 6)).